The following is a 197-amino-acid chain: MKNNYTSLKSSVDEEDELKTGHEIDLEKGPLPEHNSEGESTLPPYSDISKLANLVPEDSSTGPTETANPNVERRQEFKDLHPNIYSLLRLLIAVLAVSVVFFTAWGCVNPLEKSTFGKIAFFVLIGLTCLILLITMILEPGLIGISIMKRLIGDNGNDERDYFVENRLLSSPDCDARQHANSDTAIPLREMNPESEA.

Residues 1 to 10 (MKNNYTSLKS) show a composition bias toward polar residues. Disordered stretches follow at residues 1 to 46 (MKNN…PPYS) and 54 to 73 (LVPE…NVER). The span at 18–37 (LKTGHEIDLEKGPLPEHNSE) shows a compositional bias: basic and acidic residues. Polar residues predominate over residues 58 to 69 (DSSTGPTETANP). Helical transmembrane passes span 83 to 105 (NIYS…FTAW) and 120 to 142 (AFFV…EPGL).

This sequence belongs to the WTF family.

Its subcellular location is the endoplasmic reticulum membrane. This is an uncharacterized protein from Schizosaccharomyces pombe (strain 972 / ATCC 24843) (Fission yeast).